Consider the following 105-residue polypeptide: uncharacterized protein (105 aa).

Residues 8–28 (FMTAGIIIALIIAVLAPFLAS) traverse the membrane as a helical segment. The interval 32 to 53 (DGLESTAEKVMPNPETEPVLES) is disordered. The chain crosses the membrane as a helical span at residues 72-92 (VSMVIGTILVLAIAYGVGAVF).

This sequence to M.jannaschii MJ1570.

The protein localises to the cell membrane. This is an uncharacterized protein from Methanothermobacter thermautotrophicus (strain ATCC 29096 / DSM 1053 / JCM 10044 / NBRC 100330 / Delta H) (Methanobacterium thermoautotrophicum).